The primary structure comprises 196 residues: 3-isopropylmalate dehydratase small subunit (196 aa).

This sequence belongs to the LeuD family. LeuD type 1 subfamily. Heterodimer of LeuC and LeuD.

It carries out the reaction (2R,3S)-3-isopropylmalate = (2S)-2-isopropylmalate. It functions in the pathway amino-acid biosynthesis; L-leucine biosynthesis; L-leucine from 3-methyl-2-oxobutanoate: step 2/4. Functionally, catalyzes the isomerization between 2-isopropylmalate and 3-isopropylmalate, via the formation of 2-isopropylmaleate. The polypeptide is 3-isopropylmalate dehydratase small subunit (Corynebacterium diphtheriae (strain ATCC 700971 / NCTC 13129 / Biotype gravis)).